A 47-amino-acid polypeptide reads, in one-letter code: Delta-actitoxin-Axm1e (47 aa).

Cystine bridges form between C4–C44, C6–C34, and C27–C45.

Belongs to the sea anemone sodium channel inhibitory toxin family. Type I subfamily.

It is found in the secreted. It localises to the nematocyst. Binds specifically to voltage-gated sodium channels (Nav), thereby delaying their inactivation. This toxin is active on a variety of voltage-gated sodium channels (Nav1.1/SCN1A, Nav1.2/SCN2A, Nav1.3/SCN3A, Nav1.4/SCN4A, Nav1.5/SCN5A and Nav1.6/SCN8A). This chain is Delta-actitoxin-Axm1e, found in Anthopleura xanthogrammica (Giant green sea anemone).